We begin with the raw amino-acid sequence, 173 residues long: Protein-export protein SecB (173 aa).

Belongs to the SecB family. In terms of assembly, homotetramer, a dimer of dimers. One homotetramer interacts with 1 SecA dimer.

The protein localises to the cytoplasm. One of the proteins required for the normal export of preproteins out of the cell cytoplasm. It is a molecular chaperone that binds to a subset of precursor proteins, maintaining them in a translocation-competent state. It also specifically binds to its receptor SecA. The sequence is that of Protein-export protein SecB from Novosphingobium aromaticivorans (strain ATCC 700278 / DSM 12444 / CCUG 56034 / CIP 105152 / NBRC 16084 / F199).